The sequence spans 424 residues: Enolase (424 aa).

Gln-163 contributes to the (2R)-2-phosphoglycerate binding site. Glu-204 (proton donor) is an active-site residue. The Mg(2+) site is built by Asp-241, Glu-284, and Asp-311. Residues Lys-336, Arg-365, Ser-366, and Lys-387 each contribute to the (2R)-2-phosphoglycerate site. Lys-336 acts as the Proton acceptor in catalysis.

The protein belongs to the enolase family. Mg(2+) serves as cofactor.

The protein resides in the cytoplasm. It is found in the secreted. The protein localises to the cell surface. It carries out the reaction (2R)-2-phosphoglycerate = phosphoenolpyruvate + H2O. It participates in carbohydrate degradation; glycolysis; pyruvate from D-glyceraldehyde 3-phosphate: step 4/5. Catalyzes the reversible conversion of 2-phosphoglycerate (2-PG) into phosphoenolpyruvate (PEP). It is essential for the degradation of carbohydrates via glycolysis. The polypeptide is Enolase (Dictyoglomus thermophilum (strain ATCC 35947 / DSM 3960 / H-6-12)).